An 887-amino-acid polypeptide reads, in one-letter code: Alanine--tRNA ligase (887 aa).

H564, H568, C675, and H679 together coordinate Zn(2+). Positions 851 to 866 (GQGGGGRPDMAQGGGP) are enriched in gly residues. The segment at 851–871 (GQGGGGRPDMAQGGGPDGDKA) is disordered.

Belongs to the class-II aminoacyl-tRNA synthetase family. Zn(2+) serves as cofactor.

Its subcellular location is the cytoplasm. The enzyme catalyses tRNA(Ala) + L-alanine + ATP = L-alanyl-tRNA(Ala) + AMP + diphosphate. Catalyzes the attachment of alanine to tRNA(Ala) in a two-step reaction: alanine is first activated by ATP to form Ala-AMP and then transferred to the acceptor end of tRNA(Ala). Also edits incorrectly charged Ser-tRNA(Ala) and Gly-tRNA(Ala) via its editing domain. The protein is Alanine--tRNA ligase of Rhizorhabdus wittichii (strain DSM 6014 / CCUG 31198 / JCM 15750 / NBRC 105917 / EY 4224 / RW1) (Sphingomonas wittichii).